A 235-amino-acid chain; its full sequence is 2,3,4,5-tetrahydropyridine-2,6-dicarboxylate N-acetyltransferase (235 aa).

This sequence belongs to the transferase hexapeptide repeat family. DapH subfamily.

The enzyme catalyses (S)-2,3,4,5-tetrahydrodipicolinate + acetyl-CoA + H2O = L-2-acetamido-6-oxoheptanedioate + CoA. The protein operates within amino-acid biosynthesis; L-lysine biosynthesis via DAP pathway; LL-2,6-diaminopimelate from (S)-tetrahydrodipicolinate (acetylase route): step 1/3. Catalyzes the transfer of an acetyl group from acetyl-CoA to tetrahydrodipicolinate. This is 2,3,4,5-tetrahydropyridine-2,6-dicarboxylate N-acetyltransferase from Anoxybacillus flavithermus (strain DSM 21510 / WK1).